We begin with the raw amino-acid sequence, 843 residues long: Protein P (843 aa).

The terminal protein domain (TP) stretch occupies residues 1-177 (MPLSYQHFRR…FCGSPYSWEQ (177 aa)). Residues 178-346 (ELQHGSTSLN…YCLSHIINLL (169 aa)) form a spacer region. The segment at 228-316 (KQGQLANGKQ…VPPSTVGSES (89 aa)) is disordered. 3 stretches are compositionally biased toward polar residues: residues 262–276 (TGHS…TSRF), 286–299 (NPSL…TSTG), and 307–316 (VPPSTVGSES). The interval 347-690 (EDWGPCYEHG…YMNLYPVARQ (344 aa)) is polymerase/reverse transcriptase domain (RT). The region spanning 357–600 (EHHIRTPRTP…YSLHFMGYII (244 aa)) is the Reverse transcriptase domain. Positions 429, 551, and 552 each coordinate Mg(2+).

Belongs to the hepadnaviridae P protein family.

The catalysed reaction is DNA(n) + a 2'-deoxyribonucleoside 5'-triphosphate = DNA(n+1) + diphosphate. The enzyme catalyses Endonucleolytic cleavage to 5'-phosphomonoester.. With respect to regulation, activated by host HSP70 and HSP40 in vitro to be able to bind the epsilon loop of the pgRNA. Because deletion of the RNase H region renders the protein partly chaperone-independent, the chaperones may be needed indirectly to relieve occlusion of the RNA-binding site by this domain. Inhibited by several reverse-transcriptase inhibitors: Lamivudine, Adefovir and Entecavir. In terms of biological role, multifunctional enzyme that converts the viral RNA genome into dsDNA in viral cytoplasmic capsids. This enzyme displays a DNA polymerase activity that can copy either DNA or RNA templates, and a ribonuclease H (RNase H) activity that cleaves the RNA strand of RNA-DNA heteroduplexes in a partially processive 3'- to 5'-endonucleasic mode. Neo-synthesized pregenomic RNA (pgRNA) are encapsidated together with the P protein, and reverse-transcribed inside the nucleocapsid. Initiation of reverse-transcription occurs first by binding the epsilon loop on the pgRNA genome, and is initiated by protein priming, thereby the 5'-end of (-)DNA is covalently linked to P protein. Partial (+)DNA is synthesized from the (-)DNA template and generates the relaxed circular DNA (RC-DNA) genome. After budding and infection, the RC-DNA migrates in the nucleus, and is converted into a plasmid-like covalently closed circular DNA (cccDNA). The activity of P protein does not seem to be necessary for cccDNA generation, and is presumably released from (+)DNA by host nuclear DNA repair machinery. This chain is Protein P, found in Homo sapiens (Human).